The sequence spans 289 residues: Mas-related G-protein coupled receptor member G (289 aa).

At 1-13 (MFSIFNIWGTFNK) the chain is on the extracellular side. The helical transmembrane segment at 14 to 34 (VLFFLSLTVSLAGLVGNALLL) threads the bilayer. At 35–52 (WHLGLHIKKGPFNTYLLH) the chain is on the cytoplasmic side. A helical membrane pass occupies residues 53–73 (LAAADFLFLSCQVGFSIATIV). Topologically, residues 74 to 78 (SGHED) are extracellular. Residues 79-99 (TLYFPVTFLWFAVGLWLLAAF) traverse the membrane as a helical segment. Over 100–120 (SVDCCLAYMFPSFCSPNRRPR) the chain is Cytoplasmic. A helical transmembrane segment spans residues 121 to 141 (FTSVVLCLVIWALTMPAVLLP). The Extracellular portion of the chain corresponds to 142-164 (ANACGLLKNGMSLLVCLKYHWTS). Residues 165-185 (VTWLAVLSGMACGASKFLLIF) form a helical membrane-spanning segment. Residues 186-199 (GNCCSSQPPPKFCK) lie on the Cytoplasmic side of the membrane. A helical transmembrane segment spans residues 200–220 (LAQCSGILLFFCRLPLVVYWC). The Extracellular portion of the chain corresponds to 221-222 (LR). A helical transmembrane segment spans residues 223 to 243 (PVLKFLLPFFFPLATLLACID). Residues 244 to 289 (SSAKPLLYYMKGRQLRKDPLQVALNRALGEESQSGLGGLSLPMHQV) lie on the Cytoplasmic side of the membrane.

The protein belongs to the G-protein coupled receptor 1 family. Mas subfamily.

The protein resides in the cell membrane. In terms of biological role, orphan receptor. May regulate nociceptor function and/or development, including the sensation or modulation of pain. This Mus musculus (Mouse) protein is Mas-related G-protein coupled receptor member G (Mrgprg).